Here is a 1025-residue protein sequence, read N- to C-terminus: Retinoblastoma-related protein (1025 aa).

Positions 1 to 20 (MEDHPPKPSIPTADASLSNH) are disordered. A domain A region spans residues 422–623 (TPVTTAMTTA…EKGSSMYNSL (202 aa)). The pocket stretch occupies residues 422–875 (TPVTTAMTTA…NEIFIPAVKP (454 aa)). The segment at 624 to 744 (TVARPALSAE…PGAGGETCAE (121 aa)) is spacer. A domain B region spans residues 745–875 (TAINVFFSKI…NEIFIPAVKP (131 aa)).

It belongs to the retinoblastoma protein (RB) family.

It localises to the nucleus. Functionally, regulator of biological processes that recruits a histone deacetylase to control gene transcription. May play a role in the entry into mitosis, negatively regulating the cell proliferation. Formation of stable complexes with geminiviridae replication-associated proteins may create a cellular environment which favors viral DNA replication. The sequence is that of Retinoblastoma-related protein (pRB) from Camellia sinensis (Tea plant).